Consider the following 253-residue polypeptide: Triosephosphate isomerase (253 aa).

A substrate-binding site is contributed by 8-10 (NWK). The active-site Electrophile is H93. E165 functions as the Proton acceptor in the catalytic mechanism. Substrate contacts are provided by residues G171, S210, and 231–232 (GG).

This sequence belongs to the triosephosphate isomerase family. As to quaternary structure, homodimer.

It localises to the cytoplasm. It carries out the reaction D-glyceraldehyde 3-phosphate = dihydroxyacetone phosphate. It participates in carbohydrate biosynthesis; gluconeogenesis. Its pathway is carbohydrate degradation; glycolysis; D-glyceraldehyde 3-phosphate from glycerone phosphate: step 1/1. In terms of biological role, involved in the gluconeogenesis. Catalyzes stereospecifically the conversion of dihydroxyacetone phosphate (DHAP) to D-glyceraldehyde-3-phosphate (G3P). The polypeptide is Triosephosphate isomerase (Francisella tularensis subsp. tularensis (strain FSC 198)).